A 903-amino-acid polypeptide reads, in one-letter code: FIGNL1-interacting regulator of recombination and mitosis (903 aa).

Phosphoserine is present on residues S101 and S795. K843 is subject to N6-acetyllysine.

In terms of assembly, interacts (via its N-terminal region) with PLK1; controls PLK1 kinase activity. Interacts (via the KVVXF motif) with PPP1CC; controls PLK1 kinase activity. Interacts with FIGNL1; may regulate homologous recombination. Post-translationally, phosphorylation at Ser-101 by PLK1 strengthens FIRRM-PLK1 interaction. Phosphorylation at Ser-795 by PLK1 negatively regulates its interaction with PPP1CC.

Its subcellular location is the chromosome. The protein localises to the centromere. It localises to the kinetochore. It is found in the nucleus. The protein resides in the midbody. Its subcellular location is the cytoplasm. The protein localises to the cytoskeleton. It localises to the spindle. Its function is as follows. Regulates PLK1 kinase activity at kinetochores and promotes faithful chromosome segregation in prometaphase by bridging kinase and phosphatase activities. Phosphorylation of FIRRM by PLK1 negatively regulates its interaction with the phosphatase, PPP1CC, thus creating a negative feedback loop for maintaining proper PLK1 kinase activity during mitosis. In complex with FIGL1 may regulate homologous recombination. This chain is FIGNL1-interacting regulator of recombination and mitosis, found in Mus musculus (Mouse).